The primary structure comprises 149 residues: Glutamate mutase sigma subunit (149 aa).

The B12-binding domain maps to 5-138; it reads DPTVVLGTIG…DAVKTELDVD (134 aa). Adenosylcob(III)alamin-binding positions include 15-19, His18, 63-65, and 94-98; these read SDAHA, SSL, and NLAVG.

This sequence belongs to the methylaspartate mutase GlmS subunit family. As to quaternary structure, heterotetramer composed of 2 epsilon subunits (GlmE) and 2 sigma subunits (GlmS). GlmE exists as a homodimer and GlmS as a monomer. The cofactor is adenosylcob(III)alamin.

The catalysed reaction is (2S,3S)-3-methyl-L-aspartate = L-glutamate. It participates in amino-acid degradation; L-glutamate degradation via mesaconate pathway; acetate and pyruvate from L-glutamate: step 1/4. Catalyzes the carbon skeleton rearrangement of L-glutamate to L-threo-3-methylaspartate ((2S,3S)-3-methylaspartate). This chain is Glutamate mutase sigma subunit, found in Halobacterium salinarum (strain ATCC 700922 / JCM 11081 / NRC-1) (Halobacterium halobium).